Here is an 807-residue protein sequence, read N- to C-terminus: Poly-beta-1,6-N-acetyl-D-glucosamine export protein (807 aa).

The signal sequence occupies residues 1–26; sequence MYSSSRKRCPKTKWALKLLTAAFLAA. TPR repeat units follow at residues 98-131, 165-198, and 279-311; these read ARGY…EPQN, KANL…NAST, and RIQV…GQII.

It localises to the cell outer membrane. In terms of biological role, exports the biofilm adhesin polysaccharide poly-beta-1,6-N-acetyl-D-glucosamine (PGA) across the outer membrane. The PGA transported seems to be partially N-deacetylated since N-deacetylation of PGA by PgaB is needed for PGA export through the PgaA porin. This Escherichia coli O157:H7 protein is Poly-beta-1,6-N-acetyl-D-glucosamine export protein (pgaA).